The primary structure comprises 637 residues: MGKKIRLTTAQALIKFLNQQYIHVDGKEEPFVEGIFTIFGHGNVLGIGQALEQDAGHLKVYQGKNEQGMAHAAMAYSKQMLRRKIYAVSTSVGPGAANLVAAAGTALANNIPVLLIPADTFATRQPDPVLQQMEQEYSAAITTNDALKPVSRYWDRITRPEQLMSSLLRAFEVMTDPAKAGPATICISQDVEGEAYDFDESFFVKRVHYIDRMQPSERELQGAAELIKSSKKPVILVGGGAKYSGARDELVAISEAYNIPLVETQAGKSTVEADFANNLGGMGITGTLAANKAARQADLIIGIGTRYTDFATSSKTAFDFDKAKFLNINVSRMQAYKLDAFQVVADAKVTLGKLHGLLEGYESEFGTTIRELKDEWLAERERLSKVTFKREAFDPEIKNHFSQEVLNEYADALNTELPQTTALLTINETIPEDSVIICSAGSLPGDLQRLWHSNVPNTYHLEYGYSCMGYEVSGTLGLKLAHPDREVYSIVGDGSFLMLHSELITAIQYNKKINVLLFDNSGFGCINNLQMDHGSGSYYCEFRTDDNQILNVDYAKVAEGYGAKTYRANTVEELKAALEDAKKQDVSTLIEMKVLPKTMTDGYDSWWHVGVAEVSEQESVQKAYEAKEKKLESAKQY.

E66 is a binding site for thiamine diphosphate. Residues S442–G522 form a thiamine pyrophosphate binding region. The Mg(2+) site is built by D493 and N520.

It belongs to the TPP enzyme family. The cofactor is Mg(2+). It depends on thiamine diphosphate as a cofactor.

The catalysed reaction is 3D-3,5/4-trihydroxycyclohexane-1,2-dione + H2O = 5-deoxy-D-glucuronate + H(+). The protein operates within polyol metabolism; myo-inositol degradation into acetyl-CoA; acetyl-CoA from myo-inositol: step 3/7. Functionally, involved in the cleavage of the C1-C2 bond of 3D-(3,5/4)-trihydroxycyclohexane-1,2-dione (THcHDO) to yield 5-deoxy-glucuronate (5DG). This chain is 3D-(3,5/4)-trihydroxycyclohexane-1,2-dione hydrolase (iolD), found in Bacillus subtilis (strain 168).